The chain runs to 442 residues: 4-alpha-glucanotransferase (442 aa).

Positions 13, 15, 17, 19, and 21 each coordinate Ca(2+). Residue Asp-186 is the Nucleophile of the active site. Residue Glu-216 is the Proton donor of the active site.

The protein belongs to the glycosyl hydrolase 13 family. Monomer. Ca(2+) is required as a cofactor.

The protein resides in the cytoplasm. The catalysed reaction is Transfers a segment of a (1-&gt;4)-alpha-D-glucan to a new position in an acceptor, which may be glucose or a (1-&gt;4)-alpha-D-glucan.. Functionally, hydrolyzes the 1,4-alpha-glycoside bonds in oligomeric and polymeric 1,4-alpha-glucans and transfers oligosaccharides (maltotriose being the shortest one) to acceptor maltodextrins. This chain is 4-alpha-glucanotransferase (mgtA), found in Thermotoga neapolitana.